The chain runs to 211 residues: Redox-sensing transcriptional repressor Rex (211 aa).

The segment at residues 18–57 (LYYRFLENLHASGKQRVSSSELSEAVKVDSATIRRDFSYF) is a DNA-binding region (H-T-H motif). 92–97 (GVGNLG) is a binding site for NAD(+).

It belongs to the transcriptional regulatory Rex family. As to quaternary structure, homodimer.

It localises to the cytoplasm. Functionally, modulates transcription in response to changes in cellular NADH/NAD(+) redox state. This chain is Redox-sensing transcriptional repressor Rex, found in Halalkalibacterium halodurans (strain ATCC BAA-125 / DSM 18197 / FERM 7344 / JCM 9153 / C-125) (Bacillus halodurans).